A 436-amino-acid chain; its full sequence is Proline--tRNA ligase (436 aa).

It belongs to the class-II aminoacyl-tRNA synthetase family. ProS type 2 subfamily. As to quaternary structure, homodimer.

The protein localises to the cytoplasm. It carries out the reaction tRNA(Pro) + L-proline + ATP = L-prolyl-tRNA(Pro) + AMP + diphosphate. Its function is as follows. Catalyzes the attachment of proline to tRNA(Pro) in a two-step reaction: proline is first activated by ATP to form Pro-AMP and then transferred to the acceptor end of tRNA(Pro). This chain is Proline--tRNA ligase, found in Neorickettsia sennetsu (strain ATCC VR-367 / Miyayama) (Ehrlichia sennetsu).